The primary structure comprises 1069 residues: MESFEGEGDSIQSPDNARGDDVQNTGEHIQDPGPGPSTGGASEGLVQNEPDSRDQQSRGQRRGDENRGWMQRIRRRRRRRAALSGHLLDMEDNVPPWFPPHDITPYVARNIRDAACQAVKHSHLQALSNLILDSGLDTQHLLCFVMAARQRLQDIRRGPLVVEGGVGWRHWLLTSPSRSWSMGYRTATLRTLTPVPNRVGADSIMLTATFGCQNGALAINTFSATVWIPPPAGPREQERYAREAEVRFLRGKWQRRFRRIFDLIELCGSLHHVWQNMLQTEENLLDFVRFMGVMSSCNSSSVNYWFHKTIGNFKPYYPWNAPPNENPYHARRGIKEQVIQKAFLKAQRQGLSMLATGGGPRGDATSETSSDEDTGRQGSDVELESSDDELPYIDPNMEPVQQRPVMFVSRVPVRKPRTLPWPTPKTHPVKRTIVKTSYRSDEAEEAQSTPERPGPSKQPSEPVEPAHTTPAGRSTVILHEPPREPEAVSFKPPPPPSRRRRGACVVYDDDIIEVIDVETTEEETTSMQRQPPLGQQPPPPVISTGSAMSSSHTDPSVTQPSKPHRKPQDGFQRSGRRQKRAMPPPVSPSDAGPPSTRPRVMAPPSTGPRVMATPSTGPRDMAPPSTGPRDMAPPSTGPRDMAPPSTGPRDMAPTVVHMFTRERLLTQSTGPAPRSFWEMRAGRDAPKIQQEPSSQQQPATQSTPPCQSWVPSVYVLPAVDAGNAQPLQISHLSSMSPTQPISHEEQPRYEDPDTPLDLSLHPDTATLPPTQDLYPGREDLQATQAPYPGYEEPRPPQAPFVGDYGFVQIPSAQWEPHPSQGTYQGHIDPQLPAALDLGPEQPRFPQDPYVYSGGQLSSCPGYAGPWPSRPQHPRYRHTLALWPREPRHGHSQGPWKPWSAHLPPQWDGSAGHGQDQVSQFPHLHSETGPPRLQLSSVPQVLYPQPLVSSSAPSWSSPQPRAPIRPIPTRFPPPPMPLQDSMAVGCDSSGTACPSMPFASDYSQGAFTPLDINAPTPKSPRVEESSHGPARCSQATSEAQEILSDNSEISVFPKDAKQTDYDASTESELD.

5 disordered regions span residues 1–75 (MESF…RIRR), 353–708 (MLAT…PCQS), 733–776 (SSMS…LYPG), 884–932 (REPR…PPRL), and 1008–1069 (PLDI…SELD). The segment covering 50–67 (PDSRDQQSRGQRRGDENR) has biased composition (basic and acidic residues). Composition is skewed to acidic residues over residues 381–391 (VELESSDDELP) and 507–524 (YDDD…EEET). A compositionally biased stretch (polar residues) spans 543-561 (STGSAMSSSHTDPSVTQPS). Low complexity predominate over residues 689–708 (QQEPSSQQQPATQSTPPCQS). Basic and acidic residues predominate over residues 742-751 (SHEEQPRYED). A compositionally biased stretch (polar residues) spans 1032 to 1048 (SQATSEAQEILSDNSEI).

This sequence belongs to the herpesviridae EBNA-6 family. As to quaternary structure, interacts with host CTPB1; this interaction leads to gene repression, but also seems to interfere with the repressive function of CtBP pre-bound to DNA, leading to EBNA6 mediated up-regulation of many host genes. Interacts with host MYC; this interaction enhances MYC stability. Interacts (via N-terminus) with host RBPJ. Interacts (via N-terminus) with host histone H2AX; this interaction facilitates H2AX proteasomal degradation. Interacts with host TP73; this interaction inhibits TP73-mediated apoptotic pathway. Interacts (via N-terminus) with host PIM1; this interaction upregulates and stabilizes PIM1 and induces cell proliferation by inhibiting the growth suppressive properties of p21.

It localises to the host nucleus. The protein resides in the host nucleus matrix. Functionally, plays an essential role for the activation and immortalization of human B-cells. Represses transcription of viral promoters TP1 and Cp through interaction with host RBPJ, and inhibits EBNA2-mediated activation of these promoters. Targets host chromatin through interactions with host transcription factors, especially RBPJ and IRF4. Alternatively, EBNA6 also regulates the transcription of the EBV oncogene LMP1 in a cell cycle-dependent manner. Modulates the activity of several host proteins involved in cell cycle regulation including host cyclin A, MYC, RB, p21 and p27 mainly through binding to the host SCF(SKP2) complex. Inhibits the promoter of host H2AX and targets H2AX to proteasomal degradation in order to promote latency and cell proliferation. Upregulates host PIM1 expression and stabilization. Potentiates PIM1 to promote cell proliferation by inhibiting the growth suppressive properties of p21. The protein is Epstein-Barr nuclear antigen 6 (EBNA6) of Epstein-Barr virus (strain AG876) (HHV-4).